The primary structure comprises 639 residues: Cystathionine gamma-synthase (639 aa).

Residue lysine 443 is modified to N6-(pyridoxal phosphate)lysine.

The protein belongs to the trans-sulfuration enzymes family. MET7 subfamily. It depends on pyridoxal 5'-phosphate as a cofactor.

It localises to the cytoplasm. Its subcellular location is the nucleus. The catalysed reaction is O-succinyl-L-homoserine + L-cysteine = L,L-cystathionine + succinate + H(+). The protein operates within amino-acid biosynthesis; L-methionine biosynthesis via de novo pathway; L-cystathionine from O-succinyl-L-homoserine: step 1/1. Functionally, catalyzes the formation of L-cystathionine from O-succinyl-L-homoserine (OSHS) and L-cysteine, via a gamma-replacement reaction. In the absence of thiol, catalyzes gamma-elimination to form 2-oxobutanoate, succinate and ammonia. The chain is Cystathionine gamma-synthase from Saccharomyces cerevisiae (strain ATCC 204508 / S288c) (Baker's yeast).